Here is a 352-residue protein sequence, read N- to C-terminus: Cellular tumor antigen p53 (352 aa).

The segment at 1-48 (MDPVPDLPESQGSFQELWETVSYPPLETLSLPTVNEPTGSWVATGDMF) is transcription activation (acidic). A DNA-binding region spans residues 87–273 (DYPGSYELEL…KTEEESRQKT (187 aa)). 4 residues coordinate Zn(2+): Cys161, His164, Cys220, and Cys224. An interaction with DNA region spans residues 254–261 (RICACPGR). Over residues 262–271 (DRKTEEESRQ) the composition is skewed to basic and acidic residues. A disordered region spans residues 262-303 (DRKTEEESRQKTQPKKRKVTPNTSSSKRKKSHSSGEEEDNRE). Residues 276–291 (KKRKVTPNTSSSKRKK) carry the Bipartite nuclear localization signal motif. Positions 302–331 (REVFHFEVYGRERYEFLKKINDGLELLEKE) are oligomerization. The Nuclear export signal signature appears at 316–327 (EFLKKINDGLEL). A disordered region spans residues 330–352 (KESKSKNKDSGMVPSSGKKLKSN). The interval 334 to 350 (SKNKDSGMVPSSGKKLK) is basic (repression of DNA-binding). Ser351 is modified (phosphoserine).

This sequence belongs to the p53 family. Binds DNA as a homotetramer. Zn(2+) serves as cofactor.

The protein localises to the cytoplasm. Its subcellular location is the nucleus. Its function is as follows. Multifunctional transcription factor that induces cell cycle arrest, DNA repair or apoptosis upon binding to its target DNA sequence. Acts as a tumor suppressor in many tumor types; induces growth arrest or apoptosis depending on the physiological circumstances and cell type. Negatively regulates cell division by controlling expression of a set of genes required for this process. One of the activated genes is an inhibitor of cyclin-dependent kinases. Apoptosis induction seems to be mediated either by stimulation of BAX and FAS antigen expression, or by repression of Bcl-2 expression. In Oryzias latipes (Japanese rice fish), this protein is Cellular tumor antigen p53 (tp53).